Here is a 105-residue protein sequence, read N- to C-terminus: Pyrimidine/purine nucleoside phosphorylase (105 aa).

It belongs to the nucleoside phosphorylase PpnP family.

The catalysed reaction is a purine D-ribonucleoside + phosphate = a purine nucleobase + alpha-D-ribose 1-phosphate. It carries out the reaction adenosine + phosphate = alpha-D-ribose 1-phosphate + adenine. It catalyses the reaction cytidine + phosphate = cytosine + alpha-D-ribose 1-phosphate. The enzyme catalyses guanosine + phosphate = alpha-D-ribose 1-phosphate + guanine. The catalysed reaction is inosine + phosphate = alpha-D-ribose 1-phosphate + hypoxanthine. It carries out the reaction thymidine + phosphate = 2-deoxy-alpha-D-ribose 1-phosphate + thymine. It catalyses the reaction uridine + phosphate = alpha-D-ribose 1-phosphate + uracil. The enzyme catalyses xanthosine + phosphate = alpha-D-ribose 1-phosphate + xanthine. In terms of biological role, catalyzes the phosphorolysis of diverse nucleosides, yielding D-ribose 1-phosphate and the respective free bases. Can use uridine, adenosine, guanosine, cytidine, thymidine, inosine and xanthosine as substrates. Also catalyzes the reverse reactions. The protein is Pyrimidine/purine nucleoside phosphorylase of Cupriavidus necator (strain ATCC 17699 / DSM 428 / KCTC 22496 / NCIMB 10442 / H16 / Stanier 337) (Ralstonia eutropha).